The chain runs to 225 residues: 3-dehydroquinate dehydratase (225 aa).

3-dehydroquinate is bound by residues 30–32 (EWR) and R62. The active-site Proton donor/acceptor is H118. K143 acts as the Schiff-base intermediate with substrate in catalysis. 3-dehydroquinate contacts are provided by R186 and Q209.

The protein belongs to the type-I 3-dehydroquinase family. In terms of assembly, homodimer.

It carries out the reaction 3-dehydroquinate = 3-dehydroshikimate + H2O. It functions in the pathway metabolic intermediate biosynthesis; chorismate biosynthesis; chorismate from D-erythrose 4-phosphate and phosphoenolpyruvate: step 3/7. Involved in the third step of the chorismate pathway, which leads to the biosynthesis of aromatic amino acids. Catalyzes the cis-dehydration of 3-dehydroquinate (DHQ) and introduces the first double bond of the aromatic ring to yield 3-dehydroshikimate. The protein is 3-dehydroquinate dehydratase of Streptococcus agalactiae serotype Ia (strain ATCC 27591 / A909 / CDC SS700).